Consider the following 319-residue polypeptide: 3-oxoacyl-[acyl-carrier-protein] reductase, chloroplastic (319 aa).

Residues 1–57 (MAAAVAAPRLISLKAVAKLGFREISQIRQLAPLHSAIPHFGMLRCRSRQPFSTSVVK) constitute a chloroplast transit peptide. Residue Ala58 is modified to N-acetylalanine. Residue 81 to 105 (ITGASRGIGKAIALALGKAGCKVLV) participates in NADP(+) binding. Residue Ser213 coordinates substrate. Tyr226 functions as the Proton acceptor in the catalytic mechanism.

This sequence belongs to the short-chain dehydrogenases/reductases (SDR) family. In terms of assembly, homotetramer.

The protein localises to the plastid. It localises to the chloroplast. It catalyses the reaction a (3R)-hydroxyacyl-[ACP] + NADP(+) = a 3-oxoacyl-[ACP] + NADPH + H(+). It participates in lipid metabolism; fatty acid biosynthesis. The polypeptide is 3-oxoacyl-[acyl-carrier-protein] reductase, chloroplastic (Arabidopsis thaliana (Mouse-ear cress)).